Reading from the N-terminus, the 92-residue chain is MPRSLKKGPFIDLHLLKKVEKAVESGDKKPLRTWSRRSTIFPNMIGLTIAVHNGRQHVPVFVSDEMVGHKLGEFAPTRTYRGHAADKKAKKR.

Belongs to the universal ribosomal protein uS19 family.

Functionally, protein S19 forms a complex with S13 that binds strongly to the 16S ribosomal RNA. In Pectobacterium atrosepticum (strain SCRI 1043 / ATCC BAA-672) (Erwinia carotovora subsp. atroseptica), this protein is Small ribosomal subunit protein uS19.